Consider the following 234-residue polypeptide: Phosphoribosylaminoimidazole-succinocarboxamide synthase (234 aa).

Belongs to the SAICAR synthetase family.

It catalyses the reaction 5-amino-1-(5-phospho-D-ribosyl)imidazole-4-carboxylate + L-aspartate + ATP = (2S)-2-[5-amino-1-(5-phospho-beta-D-ribosyl)imidazole-4-carboxamido]succinate + ADP + phosphate + 2 H(+). It participates in purine metabolism; IMP biosynthesis via de novo pathway; 5-amino-1-(5-phospho-D-ribosyl)imidazole-4-carboxamide from 5-amino-1-(5-phospho-D-ribosyl)imidazole-4-carboxylate: step 1/2. This is Phosphoribosylaminoimidazole-succinocarboxamide synthase from Pyrococcus furiosus (strain ATCC 43587 / DSM 3638 / JCM 8422 / Vc1).